Reading from the N-terminus, the 219-residue chain is Envelope protein UL45 homolog (219 aa).

The Intravirion portion of the chain corresponds to 1–57; it reads MEDYKLLQLETATVDAQAPPLPTKTVPVFAPPLSTPPQPNELVYTKRRRTKRKAKCR. The chain crosses the membrane as a helical; Signal-anchor for type II membrane protein span at residues 58-78; sequence CLFFTMGMFALGVLMTTAILV. Residues 79-219 are Virion surface-facing; it reads STFILTVPIG…RLDHIIPFPR (141 aa). Asparagine 113, asparagine 120, and asparagine 138 each carry an N-linked (GlcNAc...) asparagine; by host glycan.

Belongs to the herpesviridae HHV-1 UL45 family. Post-translationally, N-glycosylated.

It localises to the virion membrane. The protein is Envelope protein UL45 homolog of Equine herpesvirus 1 (strain Ab4p) (EHV-1).